We begin with the raw amino-acid sequence, 1124 residues long: Translation initiation factor IF-2 (1124 aa).

Residues 32-41 show a composition bias toward low complexity; it reads IAAKSHSSSI. Disordered regions lie at residues 32–451 and 480–523; these read IAAK…QKVH and LARP…RAAR. Over residues 94–104 the composition is skewed to polar residues; sequence ATSSSEISQVK. Residues 134-173 are compositionally biased toward low complexity; the sequence is VNPTTTPTSSPPKTAARPVNAPISRPATPSRPSAPTPRSA. A compositionally biased stretch (polar residues) spans 192 to 203; the sequence is GQTSTSSKATTV. A compositionally biased stretch (low complexity) spans 214–227; the sequence is SRPQSPAAPGRSAP. Composition is skewed to basic and acidic residues over residues 235–246 and 261–272; these read SDRKAPKPELVG and PEPEGQRPDKKR. Composition is skewed to low complexity over residues 274-283 and 411-422; these read GISPRPIGGP and RPAQAPAAGAPR. Residues 425–439 show a composition bias toward basic and acidic residues; sequence GRPDWDDSAKLEALR. 2 stretches are compositionally biased toward basic residues: residues 484–493 and 500–514; these read AKPKSQKKPA and LRKR…RQRR. The 173-residue stretch at 615 to 787 folds into the tr-type G domain; sequence RRPPVVTVMG…ILLVTEVEDL (173 aa). Residues 624–631 form a G1 region; that stretch reads GHVDHGKT. 624 to 631 is a GTP binding site; the sequence is GHVDHGKT. The interval 649-653 is G2; the sequence is GITQH. The G3 stretch occupies residues 674–677; sequence DTPG. GTP contacts are provided by residues 674–678 and 728–731; these read DTPGH and NKTD. Positions 728 to 731 are G4; that stretch reads NKTD. The segment at 764–766 is G5; sequence SAI.

It belongs to the TRAFAC class translation factor GTPase superfamily. Classic translation factor GTPase family. IF-2 subfamily.

The protein resides in the cytoplasm. Its function is as follows. One of the essential components for the initiation of protein synthesis. Protects formylmethionyl-tRNA from spontaneous hydrolysis and promotes its binding to the 30S ribosomal subunits. Also involved in the hydrolysis of GTP during the formation of the 70S ribosomal complex. This chain is Translation initiation factor IF-2, found in Prochlorococcus marinus (strain MIT 9303).